The primary structure comprises 395 residues: Calsequestrin-1 (395 aa).

The signal sequence occupies residues 1-28 (MNAADRMGARVALLLLLVLGSPQSGVHG). Tyr-37 is modified (phosphotyrosine). A Phosphoserine modification is found at Ser-75. The residue at position 118 (Thr-118) is a Phosphothreonine. Ser-210 carries the post-translational modification Phosphoserine. Asn-344 carries N-linked (GlcNAc...) asparagine glycosylation. The tract at residues 376 to 395 (EGEINTEDDDDEDDDDDDDD) is disordered.

Belongs to the calsequestrin family. Monomer; increases in response to a depletion of intracellular calcium. Homodimer. Homotetramer and homopolymer. Can form linear homooligomers. Ca(2+) ions promote oligomerization. Interacts (via C-terminal end and preferentially with the monomeric form) with STIM1; this interaction increases in response to a depletion of intracellular calcium, decreases both STIM1 aggregation and clustering, interaction of STIM1 with ORAI1 and store-operated Ca(2+) entry (SOCE) activity. Interacts with ASPH and TRDN. In terms of processing, N-glycosylated. Detected in skeletal muscle (at protein level). Detected in skeletal muscle.

It localises to the endoplasmic reticulum. The protein localises to the sarcoplasmic reticulum. Its subcellular location is the sarcoplasmic reticulum lumen. The protein resides in the mitochondrion matrix. It is found in the sarcoplasmic reticulum membrane. Functionally, calsequestrin is a high-capacity, moderate affinity, calcium-binding protein and thus acts as an internal calcium store in muscle. Calcium ions are bound by clusters of acidic residues at the protein surface, often at the interface between subunits. Can bind around 80 Ca(2+) ions. Regulates the release of lumenal Ca(2+) via the calcium release channel RYR1; this plays an important role in triggering muscle contraction. Negatively regulates store-operated Ca(2+) entry (SOCE) activity. This Oryctolagus cuniculus (Rabbit) protein is Calsequestrin-1 (CASQ1).